The primary structure comprises 247 residues: tRNA (guanine-N(1)-)-methyltransferase (247 aa).

S-adenosyl-L-methionine-binding positions include G115 and 134 to 139; that span reads IGDFVL.

The protein belongs to the RNA methyltransferase TrmD family. As to quaternary structure, homodimer.

The protein localises to the cytoplasm. The catalysed reaction is guanosine(37) in tRNA + S-adenosyl-L-methionine = N(1)-methylguanosine(37) in tRNA + S-adenosyl-L-homocysteine + H(+). In terms of biological role, specifically methylates guanosine-37 in various tRNAs. In Anaeromyxobacter dehalogenans (strain 2CP-C), this protein is tRNA (guanine-N(1)-)-methyltransferase.